Here is a 601-residue protein sequence, read N- to C-terminus: Secretogranin-2 (601 aa).

The N-terminal stretch at 1 to 30 (MSSQRNYCLAGCLSSCILVILMSFSDAASF) is a signal peptide. The disordered stretch occupies residues 89–109 (EQKDTQALSTDTAKSPTSDDE). Residues 93 to 104 (TQALSTDTAKSP) are compositionally biased toward polar residues. Tyrosine 151 carries the sulfotyrosine modification. A compositionally biased stretch (basic and acidic residues) spans 258-273 (VESQTQEELKESKEEV). Residues 258–307 (VESQTQEELKESKEEVEKTDDMEDEIKRSGLLGLQDEEPEKDTKEQESEN) form a disordered region.

It belongs to the chromogranin/secretogranin protein family.

It localises to the secreted. Functionally, neuroendocrine protein of the granin family that regulates the biogenesis of secretory granules. In Pelophylax ridibundus (Marsh frog), this protein is Secretogranin-2.